The primary structure comprises 260 residues: Putative ATP-binding protein BruAb2_1123 (260 aa).

Residues 5 to 228 form the ABC transporter domain; sequence ISFNNVVMRY…DLPYPRTEAI (224 aa). 37–44 lines the ATP pocket; that stretch reads GPSGCGKS.

This sequence belongs to the ABC transporter superfamily. As to quaternary structure, the complex is composed of two ATP-binding proteins (BruAb2_1123), two transmembrane proteins (BruAb2_1124) and a solute-binding protein (BruAb2_1122).

The protein localises to the cell inner membrane. Its function is as follows. Probably part of an ABC transporter complex. Probably Responsible for energy coupling to the transport system. In Brucella abortus biovar 1 (strain 9-941), this protein is Putative ATP-binding protein BruAb2_1123.